We begin with the raw amino-acid sequence, 219 residues long: Protein RhiB (219 aa).

Residues 174-195 show a composition bias toward polar residues; the sequence is AGISQQGNAAGTSISSKSTGSP. The interval 174–201 is disordered; that stretch reads AGISQQGNAAGTSISSKSTGSPENPART.

Functionally, may be involved in plant-microbe interaction. The chain is Protein RhiB (rhiB) from Rhizobium leguminosarum bv. viciae.